A 1956-amino-acid polypeptide reads, in one-letter code: Sodium channel protein type 10 subunit alpha (1956 aa).

The Cytoplasmic segment spans residues 1–125; the sequence is MELPFASVGT…FNLIRRTAIK (125 aa). The tract at residues 31–54 is disordered; it reads HRAAKKARTKHRGQEDKGEKPRPQ. The span at 32–41 shows a compositional bias: basic residues; that stretch reads RAAKKARTKH. A compositionally biased stretch (basic and acidic residues) spans 42–54; that stretch reads RGQEDKGEKPRPQ. An I repeat occupies 116 to 404; it reads FNLIRRTAIK…VTMAYEEQSQ (289 aa). A helical membrane pass occupies residues 126–149; it reads VSVHSWFSIFITITILVNCVCMTR. The Extracellular portion of the chain corresponds to 150–154; the sequence is TDLPE. Residues 155–174 traverse the membrane as a helical segment; it reads KVEYVFTVIYTFEALIKILA. Topologically, residues 175-187 are cytoplasmic; sequence RGFCLNEFTYLRD. Residues 188–206 form a helical membrane-spanning segment; it reads PWNWLDFSVITLAYVGAAI. Residues 207–212 lie on the Extracellular side of the membrane; the sequence is DLRGIS. Residues 213–232 form a helical; Voltage-sensor membrane-spanning segment; it reads GLRTFRVLRALKTVSVIPGL. Topologically, residues 233–248 are cytoplasmic; that stretch reads KVIVGALIHSVRKLAD. The chain crosses the membrane as a helical span at residues 249–272; it reads VTILTVFCLSVFALVGLQLFKGNL. Over 273–340 the chain is Extracellular; that stretch reads KNKCIRNGTD…PDFNYTSFDS (68 aa). The cysteines at positions 276 and 318 are disulfide-linked. N-linked (GlcNAc...) asparagine glycans are attached at residues asparagine 279, asparagine 288, asparagine 311, and asparagine 334. The pore-forming intramembrane region spans 341 to 365; it reads FAWAFLSLFRLMTQDSWERLYQQTL. At 366–372 the chain is on the extracellular side; sequence RASGKMY. A helical membrane pass occupies residues 373–398; the sequence is MVFFVLVIFLGSFYLVNLILAVVTMA. At 399–658 the chain is on the cytoplasmic side; the sequence is YEEQSQATIA…KWRKFKMALF (260 aa). Serine 440, serine 443, serine 466, and serine 478 each carry phosphoserine. Positions 441 to 453 are enriched in polar residues; the sequence is LQSHSGSPLASKN. Disordered stretches follow at residues 441–484 and 537–581; these read LQSH…YNQR and LLGR…AGAP. The span at 475–484 shows a compositional bias: polar residues; the sequence is SPQSDPYNQR. Serine 611 and serine 614 each carry phosphoserine. Residues 646–910 form an II repeat; sequence CCPKWRKFKM…EDDGEVNNLQ (265 aa). Residues 659–683 traverse the membrane as a helical segment; sequence ELVTDPFAELTITLCIVVNTVFMAM. Over 684–694 the chain is Extracellular; it reads EHYPMTDAFDA. A helical membrane pass occupies residues 695–718; the sequence is MLQAGNIVFTVFFTMEMAFKIIAF. Residues 719–726 are Cytoplasmic-facing; sequence DPYYYFQK. A helical membrane pass occupies residues 727–746; sequence KWNIFDCVIVTVSLLELSAS. Over 747 to 752 the chain is Extracellular; that stretch reads KKGSLS. Residues 753-772 form a helical; Voltage-sensor membrane-spanning segment; the sequence is VLRTFRLLRVFKLAKSWPTL. Topologically, residues 773–788 are cytoplasmic; the sequence is NTLIKIIGNSVGALGN. A helical transmembrane segment spans residues 789–809; sequence LTFILAIIVFIFALVGKQLLS. At 810 to 833 the chain is on the extracellular side; it reads EDYGCRKDGVSVWNGEKLRWHMCD. The pore-forming intramembrane region spans 834 to 854; it reads FFHSFLVVFRILCGEWIENMW. The Extracellular segment spans residues 855-863; it reads VCMEVSQKS. Cysteine 856 and cysteine 865 are oxidised to a cystine. A helical transmembrane segment spans residues 864 to 889; that stretch reads ICLILFLTVMVLGNLVVLNLFIALLL. Residues 890–1148 are Cytoplasmic-facing; it reads NSFSADNLTA…GWQVRKTCYR (259 aa). Residues 1008–1094 form a disordered region; sequence DELEEDMEQA…SEGSTVDCPD (87 aa). One copy of the III repeat lies at 1141-1450; the sequence is QVRKTCYRIV…KKYYNAMKKL (310 aa). The chain crosses the membrane as a helical span at residues 1149–1172; it reads IVEHSWFESFIIFMILLSSGALAF. The Extracellular segment spans residues 1173 to 1185; it reads EDNYLEEKPRVKS. A helical transmembrane segment spans residues 1186–1211; it reads VLEYTDRVFTFIFVFEMLLKWVAYGF. The Cytoplasmic portion of the chain corresponds to 1212–1217; that stretch reads KKYFTN. Residues 1218–1239 traverse the membrane as a helical segment; sequence AWCWLDFLIVNISLTSLIAKIL. The Extracellular portion of the chain corresponds to 1240–1243; it reads EYSD. Residues 1244–1265 traverse the membrane as a helical; Voltage-sensor segment; the sequence is VASIKALRTLRALRPLRALSRF. Residues 1266–1284 are Cytoplasmic-facing; sequence EGMRVVVDALVGAIPSIMN. The chain crosses the membrane as a helical span at residues 1285–1312; that stretch reads VLLVCLIFWLIFSIMGVNLFAGKFSKCV. Residues 1313–1354 are Extracellular-facing; the sequence is DTRNNPFSNVNSTMVNNKSECHNQNSTGHFFWVNVKVNFDNV. Residues asparagine 1323, asparagine 1329, and asparagine 1337 are each glycosylated (N-linked (GlcNAc...) asparagine). The pore-forming intramembrane region spans 1355-1376; sequence AMGYLALLQVATFKGWMDIMYA. Residues 1377–1392 are Extracellular-facing; the sequence is AVDSGEINSQPNWENN. Residues 1393–1419 form a helical membrane-spanning segment; that stretch reads LYMYLYFVVFIIFGGFFTLNLFVGVII. The Cytoplasmic segment spans residues 1420-1472; it reads DNFNQQKKKLGGQDIFMTEEQKKYYNAMKKLGSKKPQKPIPRPLNKYQGFVFD. Serine 1452 carries the post-translational modification Phosphoserine; by PKC. One copy of the IV repeat lies at 1459-1758; the sequence is IPRPLNKYQG…WEKFDPEATQ (300 aa). Residues 1473 to 1496 traverse the membrane as a helical segment; the sequence is IVTRQAFDIIIMVLICLNMITMMV. Topologically, residues 1497 to 1507 are extracellular; the sequence is ETDEQGEEKTK. A helical transmembrane segment spans residues 1508–1531; sequence VLGRINQFFVAVFTGECVMKMFAL. At 1532 to 1537 the chain is on the cytoplasmic side; that stretch reads RQYYFT. A helical transmembrane segment spans residues 1538 to 1561; it reads NGWNVFDFIVVILSIGSLLFSAIL. Over 1562–1573 the chain is Extracellular; it reads KSLENYFSPTLF. Residues 1574-1595 traverse the membrane as a helical; Voltage-sensor segment; sequence RVIRLARIGRILRLIRAAKGIR. At 1596–1610 the chain is on the cytoplasmic side; sequence TLLFALMMSLPALFN. The chain crosses the membrane as a helical span at residues 1611–1633; the sequence is IGLLLFLVMFIYSIFGMASFANV. Topologically, residues 1634-1647 are extracellular; that stretch reads VDEAGIDDMFNFKT. The pore-forming intramembrane region spans 1648–1670; the sequence is FGNSMLCLFQITTSAGWDGLLSP. The Extracellular portion of the chain corresponds to 1671–1698; it reads ILNTGPPYCDPNLPNSNGSRGNCGSPAV. The N-linked (GlcNAc...) asparagine glycan is linked to asparagine 1687. Residues 1699–1723 form a helical membrane-spanning segment; the sequence is GIIFFTTYIIISFLIVVNMYIAVIL. Over 1724-1956 the chain is Cytoplasmic; it reads ENFNVATEES…AKEGNSPGPQ (233 aa). Positions 1852–1881 constitute an IQ domain; the sequence is EDLSATVIQKAYRSYMLHRSLTLSNTLHVP. A disordered region spans residues 1906-1956; the sequence is DKSETASATSFPPSYDSVTRGLSDRANINPSSSMQNEDEVAAKEGNSPGPQ. Residues 1931–1940 are compositionally biased toward polar residues; it reads ANINPSSSMQ.

Belongs to the sodium channel (TC 1.A.1.10) family. Nav1.8/SCN10A subfamily. The channel consists of an ion conducting pore forming alpha-subunit regulated by one or more associated auxiliary subunits SCN1B, SCN2B and SCN3B; electrophysiological properties may vary depending on the type of the associated beta subunits. Found in a number of complexes with PRX, DYNLT1 and PDZD2. Interacts with proteins such as FSTL1, PRX, DYNLT1, PDZD2, S100A10 and many others. Interacts with NEDD4 and NEDD4L. Post-translationally, ubiquitinated by NEDD4L; which promotes its endocytosis. Phosphorylation at Ser-1452 by PKC in a highly conserved cytoplasmic loop slows inactivation of the sodium channel and reduces peak sodium currents. In terms of processing, lacks the cysteine which covalently binds the conotoxin GVIIJ. This cysteine (position 815) is speculated in other sodium channel subunits alpha to be implied in covalent binding with the sodium channel subunit beta-2 or beta-4. Expressed in dorsal root ganglia, trigeminal ganglia, nodose ganglia and sciatic nerve.

It is found in the cell membrane. The catalysed reaction is Na(+)(in) = Na(+)(out). Tetrodotoxin-resistant channel that mediates the voltage-dependent sodium ion permeability of excitable membranes. Assuming opened or closed conformations in response to the voltage difference across the membrane, the protein forms a sodium-selective channel through which sodium ions may pass in accordance with their electrochemical gradient. Plays a role in neuropathic pain mechanisms. The polypeptide is Sodium channel protein type 10 subunit alpha (Rattus norvegicus (Rat)).